The sequence spans 346 residues: Uroporphyrinogen decarboxylase (346 aa).

Residues arginine 26–arginine 30, aspartate 76, tyrosine 153, serine 208, and histidine 323 contribute to the substrate site.

The protein belongs to the uroporphyrinogen decarboxylase family. In terms of assembly, homodimer.

Its subcellular location is the cytoplasm. It carries out the reaction uroporphyrinogen III + 4 H(+) = coproporphyrinogen III + 4 CO2. The protein operates within porphyrin-containing compound metabolism; protoporphyrin-IX biosynthesis; coproporphyrinogen-III from 5-aminolevulinate: step 4/4. Its function is as follows. Catalyzes the decarboxylation of four acetate groups of uroporphyrinogen-III to yield coproporphyrinogen-III. The protein is Uroporphyrinogen decarboxylase of Prochlorococcus marinus (strain MIT 9515).